We begin with the raw amino-acid sequence, 105 residues long: UPF0145 protein GK1405 (105 aa).

It belongs to the UPF0145 family.

This Geobacillus kaustophilus (strain HTA426) protein is UPF0145 protein GK1405.